The following is a 305-amino-acid chain: UDP-N-acetylenolpyruvoylglucosamine reductase 2 (305 aa).

The region spanning 33 to 197 (VGGKADVFVA…LEARFELEEG (165 aa)) is the FAD-binding PCMH-type domain. Residue R176 is part of the active site. Residue S226 is the Proton donor of the active site. The active site involves E296.

This sequence belongs to the MurB family. FAD serves as cofactor.

It localises to the cytoplasm. The enzyme catalyses UDP-N-acetyl-alpha-D-muramate + NADP(+) = UDP-N-acetyl-3-O-(1-carboxyvinyl)-alpha-D-glucosamine + NADPH + H(+). Its pathway is cell wall biogenesis; peptidoglycan biosynthesis. Its function is as follows. Cell wall formation. This is UDP-N-acetylenolpyruvoylglucosamine reductase 2 from Bacillus cereus (strain ATCC 10987 / NRS 248).